Consider the following 385-residue polypeptide: UDP-N-acetylglucosamine--N-acetylmuramyl-(pentapeptide) pyrophosphoryl-undecaprenol N-acetylglucosamine transferase (385 aa).

Residues 11 to 13 (TGG), Asn117, Arg160, Ser215, and Gln317 each bind UDP-N-acetyl-alpha-D-glucosamine.

The protein belongs to the glycosyltransferase 28 family. MurG subfamily.

It is found in the cell inner membrane. The enzyme catalyses di-trans,octa-cis-undecaprenyl diphospho-N-acetyl-alpha-D-muramoyl-L-alanyl-D-glutamyl-meso-2,6-diaminopimeloyl-D-alanyl-D-alanine + UDP-N-acetyl-alpha-D-glucosamine = di-trans,octa-cis-undecaprenyl diphospho-[N-acetyl-alpha-D-glucosaminyl-(1-&gt;4)]-N-acetyl-alpha-D-muramoyl-L-alanyl-D-glutamyl-meso-2,6-diaminopimeloyl-D-alanyl-D-alanine + UDP + H(+). Its pathway is cell wall biogenesis; peptidoglycan biosynthesis. Functionally, cell wall formation. Catalyzes the transfer of a GlcNAc subunit on undecaprenyl-pyrophosphoryl-MurNAc-pentapeptide (lipid intermediate I) to form undecaprenyl-pyrophosphoryl-MurNAc-(pentapeptide)GlcNAc (lipid intermediate II). The sequence is that of UDP-N-acetylglucosamine--N-acetylmuramyl-(pentapeptide) pyrophosphoryl-undecaprenol N-acetylglucosamine transferase from Rickettsia prowazekii (strain Madrid E).